The primary structure comprises 214 residues: Guanylate kinase (214 aa).

Positions 6–192 (GTLYIISAPS…ALEDLKSIFR (187 aa)) constitute a Guanylate kinase-like domain. 13 to 20 (APSGAGKT) provides a ligand contact to ATP.

This sequence belongs to the guanylate kinase family.

The protein localises to the cytoplasm. The enzyme catalyses GMP + ATP = GDP + ADP. Functionally, essential for recycling GMP and indirectly, cGMP. The sequence is that of Guanylate kinase from Pseudomonas syringae pv. tomato (strain ATCC BAA-871 / DC3000).